The chain runs to 664 residues: MSELLLELFSEEIPAFMQKNAEEAYLNIFTKIFKENEIFAQVQVFVGPRRITLHATNLPKVILPKEEEIKGPSIEAPEIAINGFCKVHNVNKFDLSTKLINKKLYYFFVKKTQAREMKEILPKIIIDAINKYSWIKSMFWGCYKIKWIRPLRNILCIFDGEILPLQFGHLSANNITYGHRLTNNKKLEIIDFENYRNKLLENNVILERLKREEIIKVGLLELANAQNLNIKQDARLIEEVTGLNEFPVVLLGKIPQKFLELPEEVIISVMRKHQKYFCLFDKTGNFAPYFLFVINGRFVNIELILQGNEKVLSARLADALYFYKHDIAKTLESRFSKLESVIFHAKLGSLKEKVDRITDICRYIAPDNIDLIMAARLCKSDLVSDMVGEFPDLQGIMGYYYAKHEGLNEEVAKAIRDHYKPQGLNDNVPSGNATLLALADKLDSLVGLIIVGETPNGSGDPYALRRQALGIIRIIIENKLEINFINLINFAVSLYKVPTNTHLDSVISFFEERAKFYFKNDYDIALINAVLDLNLVDTKFKLDTLKEFLVQDVGKQLLNAYKRVSNIIGNQKITGLVDVSLFSTQYEKELFEVIQIISQQIIAIIANKDYKKALNLLSSLLKPITSFFDNVLVNDSDPKIAQNRLSLLHNTCEVFDKVVKFCRL.

Belongs to the class-II aminoacyl-tRNA synthetase family. In terms of assembly, tetramer of two alpha and two beta subunits.

The protein resides in the cytoplasm. It catalyses the reaction tRNA(Gly) + glycine + ATP = glycyl-tRNA(Gly) + AMP + diphosphate. The polypeptide is Glycine--tRNA ligase beta subunit (Rickettsia typhi (strain ATCC VR-144 / Wilmington)).